The primary structure comprises 262 residues: Small ribosomal subunit protein eS4A (262 aa).

An S4 RNA-binding domain is found at 42-105; that stretch reads LPLIVFLRNR…GEHFRLVYDI (64 aa).

The protein belongs to the eukaryotic ribosomal protein eS4 family. Component of the small ribosomal subunit (SSU). Mature yeast ribosomes consist of a small (40S) and a large (60S) subunit. The 40S small subunit contains 1 molecule of ribosomal RNA (18S rRNA) and at least 33 different proteins. The large 60S subunit contains 3 rRNA molecules (25S, 5.8S and 5S rRNA) and at least 46 different proteins.

It localises to the cytoplasm. Component of the ribosome, a large ribonucleoprotein complex responsible for the synthesis of proteins in the cell. The small ribosomal subunit (SSU) binds messenger RNAs (mRNAs) and translates the encoded message by selecting cognate aminoacyl-transfer RNA (tRNA) molecules. The large subunit (LSU) contains the ribosomal catalytic site termed the peptidyl transferase center (PTC), which catalyzes the formation of peptide bonds, thereby polymerizing the amino acids delivered by tRNAs into a polypeptide chain. The nascent polypeptides leave the ribosome through a tunnel in the LSU and interact with protein factors that function in enzymatic processing, targeting, and the membrane insertion of nascent chains at the exit of the ribosomal tunnel. The protein is Small ribosomal subunit protein eS4A (rps401) of Schizosaccharomyces pombe (strain 972 / ATCC 24843) (Fission yeast).